The following is a 365-amino-acid chain: Terpene cyclase 4 (365 aa).

Pro residues predominate over residues Met1–Ser11. The disordered stretch occupies residues Met1–Lys20. Mg(2+) contacts are provided by Asp118, Asn260, and Ser264. A D(D/E)XX(D/E) motif motif is present at residues Asp118 to Asp122. The NSE motif signature appears at Asn260 to Asp268. The WxxxxxRY motif signature appears at Trp341 to Tyr348. Positions 347 and 348 each coordinate (2E,6E)-farnesyl diphosphate.

Belongs to the terpene synthase family. In terms of assembly, homodimer. Requires Mg(2+) as cofactor.

It carries out the reaction (2E,6E)-farnesyl diphosphate + H2O = koraiol + diphosphate. It functions in the pathway sesquiterpene biosynthesis. In terms of biological role, terpene cyclase that catalyzes the cyclization of farnesyl diphosphate (FPP) to the sesquiterpene koraiol. The polypeptide is Terpene cyclase 4 (Gibberella fujikuroi (strain CBS 195.34 / IMI 58289 / NRRL A-6831) (Bakanae and foot rot disease fungus)).